We begin with the raw amino-acid sequence, 516 residues long: Histidine ammonia-lyase (516 aa).

A cross-link (5-imidazolinone (Ala-Gly)) is located at residues 143–145; that stretch reads ASG. S144 is subject to 2,3-didehydroalanine (Ser).

This sequence belongs to the PAL/histidase family. Contains an active site 4-methylidene-imidazol-5-one (MIO), which is formed autocatalytically by cyclization and dehydration of residues Ala-Ser-Gly.

The protein localises to the cytoplasm. It carries out the reaction L-histidine = trans-urocanate + NH4(+). It functions in the pathway amino-acid degradation; L-histidine degradation into L-glutamate; N-formimidoyl-L-glutamate from L-histidine: step 1/3. The sequence is that of Histidine ammonia-lyase from Koribacter versatilis (strain Ellin345).